The sequence spans 204 residues: Molybdenum cofactor guanylyltransferase (204 aa).

GTP contacts are provided by residues 10–12 (LAG), K23, N51, D69, and D99. Mg(2+) is bound at residue D99.

It belongs to the MobA family. In terms of assembly, monomer. Mg(2+) serves as cofactor.

It is found in the cytoplasm. The catalysed reaction is Mo-molybdopterin + GTP + H(+) = Mo-molybdopterin guanine dinucleotide + diphosphate. In terms of biological role, transfers a GMP moiety from GTP to Mo-molybdopterin (Mo-MPT) cofactor (Moco or molybdenum cofactor) to form Mo-molybdopterin guanine dinucleotide (Mo-MGD) cofactor. This chain is Molybdenum cofactor guanylyltransferase, found in Shewanella piezotolerans (strain WP3 / JCM 13877).